Reading from the N-terminus, the 749-residue chain is MRITFFASLLLFTNTIFISFSFAIAGINKESPLSIGQTLSSSNGVYELGFFSFNNSENHYLGIWFKGIIPRVVVWVANRENPVTDSTANLAISSNASLLLYNGKHGVAWSSGETLASNGSRAELSDTGNLIVIDNFSGRTLWQSFDHLGDTMLPFSALMYNLATGEKQVLTSWKSYTNPAVGDFVLQITTQVPTQALTMRGSKPYWRSGPWAKTRNFKLPRIVITSKGSLEISRHSGTDWVLNFVAPAHSCDYYGVCGPFGICVKSVCKCFKGFIPKYIEEWKRGNWTDGCVRRTKLHCQENSTKKDANFFHPVANIKPPDFYEFASAVDAEGCYKICLHNCSCLAFSYIHGIGCLIWNQDFMDTVQFSAGGEILSIRLARSELGGNKRKKTITASIVSLSLFLILGSTAFGFWRYRVKHNASQDAPKYDLEPQDVSGSYLFEMNTIQTATNNFSLSNKLGQGGFGSVYKGKLQDGKEIAVKRLSSSSGQGKEEFMNEIVLISKLQHKNLVRILGCCIEGEERLLIYEFMLNKSLDTFLFDSRKRLEIDWPKRFDIIQGIARGIHYLHRDSCLKVIHRDLKVSNILLDEKMNPKISDFGLARMYQGTEYQDNTRRVVGTLGYMSPEDILEIISGEKISRFSYGKEEKTLIAYAWESWCETGGVDLLDKDVADSCRPLEVERCIQIGLLCVQHQPADRPNTLELMSMLTTTSDLPSPKQPTFVVHWRDDESSSKDLITVNEMTKSVILGR.

Positions 1–25 (MRITFFASLLLFTNTIFISFSFAIA) are cleaved as a signal peptide. The 120-residue stretch at 26-145 (GINKESPLSI…FSGRTLWQSF (120 aa)) folds into the Bulb-type lectin domain. Residues 26–392 (GINKESPLSI…ELGGNKRKKT (367 aa)) are Extracellular-facing. 4 N-linked (GlcNAc...) asparagine glycosylation sites follow: Asn54, Asn95, Asn118, and Asn135. The EGF-like; atypical domain maps to 247–280 (PAHSCDYYGVCGPFGICVKSVCKCFKGFIPKYIE). 2 cysteine pairs are disulfide-bonded: Cys251-Cys263 and Cys257-Cys268. N-linked (GlcNAc...) asparagine glycans are attached at residues Asn286, Asn302, and Asn341. The PAN domain maps to 299–381 (CQENSTKKDA…GEILSIRLAR (83 aa)). Intrachain disulfides connect Cys334–Cys355 and Cys338–Cys344. Residues 393–413 (ITASIVSLSLFLILGSTAFGF) traverse the membrane as a helical segment. The Cytoplasmic segment spans residues 414-749 (WRYRVKHNAS…EMTKSVILGR (336 aa)). The 268-residue stretch at 454-721 (FSLSNKLGQG…DLPSPKQPTF (268 aa)) folds into the Protein kinase domain. ATP is bound by residues 460 to 468 (LGQGGFGSV) and Lys482. The tract at residues 543–560 (RKRLEIDWPKRFDIIQGI) is caM-binding. Residue Asp579 is the Proton acceptor of the active site.

This sequence belongs to the protein kinase superfamily. Ser/Thr protein kinase family.

Its subcellular location is the cell membrane. The catalysed reaction is L-seryl-[protein] + ATP = O-phospho-L-seryl-[protein] + ADP + H(+). It catalyses the reaction L-threonyl-[protein] + ATP = O-phospho-L-threonyl-[protein] + ADP + H(+). The sequence is that of G-type lectin S-receptor-like serine/threonine-protein kinase At1g61460 from Arabidopsis thaliana (Mouse-ear cress).